The sequence spans 294 residues: tRNA dimethylallyltransferase (294 aa).

Residue 9 to 16 (GPTASGKS) coordinates ATP. 11–16 (TASGKS) contacts substrate. Positions 155–159 (QRVIR) are interaction with substrate tRNA.

This sequence belongs to the IPP transferase family. As to quaternary structure, monomer. The cofactor is Mg(2+).

The enzyme catalyses adenosine(37) in tRNA + dimethylallyl diphosphate = N(6)-dimethylallyladenosine(37) in tRNA + diphosphate. Functionally, catalyzes the transfer of a dimethylallyl group onto the adenine at position 37 in tRNAs that read codons beginning with uridine, leading to the formation of N6-(dimethylallyl)adenosine (i(6)A). The sequence is that of tRNA dimethylallyltransferase from Leuconostoc citreum (strain KM20).